The primary structure comprises 329 residues: Oligopeptide transport ATP-binding protein AppF (329 aa).

Residues 10–261 (LELRDVKKYF…PLHPYTQALL (252 aa)) enclose the ABC transporter domain. Residue 53 to 60 (GESGCGKS) coordinates ATP.

The protein belongs to the ABC transporter superfamily.

The protein resides in the cell membrane. Its function is as follows. This protein is a component of an oligopeptide permease, a binding protein-dependent transport system. This APP system can completely substitute for the OPP system in both sporulation and genetic competence, though, unlike OPP, is incapable of transporting tripeptides. Probably responsible for energy coupling to the transport system. The chain is Oligopeptide transport ATP-binding protein AppF (appF) from Bacillus subtilis (strain 168).